The primary structure comprises 290 residues: Nucleotide-binding protein Xfasm12_0753 (290 aa).

An ATP-binding site is contributed by 13–20 (GLSGSGKS). 65–68 (DIRS) contacts GTP.

The protein belongs to the RapZ-like family.

Its function is as follows. Displays ATPase and GTPase activities. The chain is Nucleotide-binding protein Xfasm12_0753 from Xylella fastidiosa (strain M12).